The chain runs to 288 residues: Bis(5'-nucleosyl)-tetraphosphatase, symmetrical (288 aa).

Belongs to the Ap4A hydrolase family.

It catalyses the reaction P(1),P(4)-bis(5'-adenosyl) tetraphosphate + H2O = 2 ADP + 2 H(+). In terms of biological role, hydrolyzes diadenosine 5',5'''-P1,P4-tetraphosphate to yield ADP. The protein is Bis(5'-nucleosyl)-tetraphosphatase, symmetrical of Pseudomonas putida (strain W619).